The sequence spans 279 residues: uncharacterized protein (279 aa).

A Reverse transcriptase domain is found at 1-87 (MRVNGRNLTN…DEYIYLGRQI (87 aa)).

This is an uncharacterized protein from Caenorhabditis elegans.